We begin with the raw amino-acid sequence, 371 residues long: Glutamate 5-kinase (371 aa).

K14 serves as a coordination point for ATP. S54, D141, and N153 together coordinate substrate. T173–D174 contributes to the ATP binding site. One can recognise a PUA domain in the interval A280–I357.

The protein belongs to the glutamate 5-kinase family.

It localises to the cytoplasm. It carries out the reaction L-glutamate + ATP = L-glutamyl 5-phosphate + ADP. It participates in amino-acid biosynthesis; L-proline biosynthesis; L-glutamate 5-semialdehyde from L-glutamate: step 1/2. Catalyzes the transfer of a phosphate group to glutamate to form L-glutamate 5-phosphate. This chain is Glutamate 5-kinase, found in Azoarcus sp. (strain BH72).